A 778-amino-acid polypeptide reads, in one-letter code: Probable dipeptidyl peptidase 4 (778 aa).

An N-terminal signal peptide occupies residues Met-1–Ala-18. N-linked (GlcNAc...) asparagine glycosylation is found at Asn-84, Asn-114, and Asn-222. Active-site charge relay system residues include Ser-616, Asp-693, and His-728.

Belongs to the peptidase S9B family.

It is found in the secreted. It catalyses the reaction Release of an N-terminal dipeptide, Xaa-Yaa-|-Zaa-, from a polypeptide, preferentially when Yaa is Pro, provided Zaa is neither Pro nor hydroxyproline.. Its function is as follows. Extracellular dipeptidyl-peptidase which removes N-terminal dipeptides sequentially from polypeptides having unsubstituted N-termini provided that the penultimate residue is proline. Contributes to pathogenicity. In Arthroderma benhamiae (strain ATCC MYA-4681 / CBS 112371) (Trichophyton mentagrophytes), this protein is Probable dipeptidyl peptidase 4 (DPP4).